Reading from the N-terminus, the 1433-residue chain is DNA-directed RNA polymerase subunit beta' (1433 aa).

Zn(2+) contacts are provided by Cys60, Cys62, Cys75, and Cys78. Residues Asp449, Asp451, and Asp453 each contribute to the Mg(2+) site. Residues Cys777, Cys851, Cys858, and Cys861 each coordinate Zn(2+). Composition is skewed to acidic residues over residues 1383 to 1393 (DSEEEEEELSE) and 1411 to 1433 (EEDE…DDDD). The tract at residues 1383-1433 (DSEEEEEELSELSEAAPVSTATLSKLVAEEDEDEDELEEEADDSDDEDDDD) is disordered.

The protein belongs to the RNA polymerase beta' chain family. In terms of assembly, the RNAP catalytic core consists of 2 alpha, 1 beta, 1 beta' and 1 omega subunit. When a sigma factor is associated with the core the holoenzyme is formed, which can initiate transcription. The cofactor is Mg(2+). Zn(2+) serves as cofactor.

The catalysed reaction is RNA(n) + a ribonucleoside 5'-triphosphate = RNA(n+1) + diphosphate. Its function is as follows. DNA-dependent RNA polymerase catalyzes the transcription of DNA into RNA using the four ribonucleoside triphosphates as substrates. In Leptospira biflexa serovar Patoc (strain Patoc 1 / Ames), this protein is DNA-directed RNA polymerase subunit beta'.